The following is a 145-amino-acid chain: Large ribosomal subunit protein uL13 (145 aa).

It belongs to the universal ribosomal protein uL13 family. As to quaternary structure, part of the 50S ribosomal subunit.

Its function is as follows. This protein is one of the early assembly proteins of the 50S ribosomal subunit, although it is not seen to bind rRNA by itself. It is important during the early stages of 50S assembly. The polypeptide is Large ribosomal subunit protein uL13 (Staphylococcus haemolyticus (strain JCSC1435)).